A 513-amino-acid chain; its full sequence is Cytochrome P450 1A2 (513 aa).

Residue S68 is glycosylated (O-linked (GlcNAc) serine). A heme-binding site is contributed by C456.

It belongs to the cytochrome P450 family. As to quaternary structure, interacts with PGRMC1; the interaction requires PGRMC1 homodimerization. Requires heme as cofactor.

The protein resides in the endoplasmic reticulum membrane. Its subcellular location is the microsome membrane. The catalysed reaction is an organic molecule + reduced [NADPH--hemoprotein reductase] + O2 = an alcohol + oxidized [NADPH--hemoprotein reductase] + H2O + H(+). The enzyme catalyses 17beta-estradiol + reduced [NADPH--hemoprotein reductase] + O2 = 2-hydroxy-17beta-estradiol + oxidized [NADPH--hemoprotein reductase] + H2O + H(+). It catalyses the reaction 17beta-estradiol + reduced [NADPH--hemoprotein reductase] + O2 = 4-hydroxy-17beta-estradiol + oxidized [NADPH--hemoprotein reductase] + H2O + H(+). It carries out the reaction estrone + reduced [NADPH--hemoprotein reductase] + O2 = 2-hydroxyestrone + oxidized [NADPH--hemoprotein reductase] + H2O + H(+). The catalysed reaction is estrone + reduced [NADPH--hemoprotein reductase] + O2 = 4-hydroxyestrone + oxidized [NADPH--hemoprotein reductase] + H2O + H(+). The enzyme catalyses cholesterol + reduced [NADPH--hemoprotein reductase] + O2 = 25-hydroxycholesterol + oxidized [NADPH--hemoprotein reductase] + H2O + H(+). It catalyses the reaction all-trans-retinol + reduced [NADPH--hemoprotein reductase] + O2 = all-trans-retinal + oxidized [NADPH--hemoprotein reductase] + 2 H2O + H(+). It carries out the reaction all-trans-retinal + reduced [NADPH--hemoprotein reductase] + O2 = all-trans-retinoate + oxidized [NADPH--hemoprotein reductase] + H2O + 2 H(+). The catalysed reaction is (5Z,8Z,11Z,14Z)-eicosatetraenoate + reduced [NADPH--hemoprotein reductase] + O2 = (14R,15S)-epoxy-(5Z,8Z,11Z)-eicosatrienoate + oxidized [NADPH--hemoprotein reductase] + H2O + H(+). The enzyme catalyses (5Z,8Z,11Z,14Z)-eicosatetraenoate + reduced [NADPH--hemoprotein reductase] + O2 = (14S,15R)-epoxy-(5Z,8Z,11Z)-eicosatrienoate + oxidized [NADPH--hemoprotein reductase] + H2O + H(+). It catalyses the reaction (5Z,8Z,11Z,14Z,17Z)-eicosapentaenoate + reduced [NADPH--hemoprotein reductase] + O2 = (17R,18S)-epoxy-(5Z,8Z,11Z,14Z)-eicosatetraenoate + oxidized [NADPH--hemoprotein reductase] + H2O + H(+). It carries out the reaction (4Z,7Z,10Z,13Z,16Z,19Z)-docosahexaenoate + reduced [NADPH--hemoprotein reductase] + O2 = (19R,20S)-epoxy-(4Z,7Z,10Z,13Z,16Z)-docosapentaenoate + oxidized [NADPH--hemoprotein reductase] + H2O + H(+). The catalysed reaction is (5S)-hydroperoxy-(6E,8Z,11Z,14Z)-eicosatetraenoate = 5-oxo-(6E,8Z,11Z,14Z)-eicosatetraenoate + H2O. The enzyme catalyses (12S)-hydroperoxy-(5Z,8Z,10E,14Z)-eicosatetraenoate = 12-oxo-(5Z,8Z,10E,14Z)-eicosatetraenoate + H2O. It catalyses the reaction (15S)-hydroperoxy-(5Z,8Z,11Z,13E)-eicosatetraenoate = 15-oxo-(5Z,8Z,11Z,13E)-eicosatetraenoate + H2O. It carries out the reaction (13S)-hydroperoxy-(9Z,11E)-octadecadienoate = 13-oxo-(9Z,11E)-octadecadienoate + H2O. The catalysed reaction is (5Z,8Z,11Z,14Z)-eicosatetraenoate + reduced [NADPH--hemoprotein reductase] + O2 = 13-hydroxy-(5Z,8Z,11Z,14Z)-eicosatetraenoate + oxidized [NADPH--hemoprotein reductase] + H2O + H(+). The enzyme catalyses (5Z,8Z,11Z,14Z)-eicosatetraenoate + reduced [NADPH--hemoprotein reductase] + O2 = 19-hydroxy-(5Z,8Z,11Z,14Z)-eicosatetraenoate + oxidized [NADPH--hemoprotein reductase] + H2O + H(+). It catalyses the reaction (9Z,12Z)-octadecadienoate + reduced [NADPH--hemoprotein reductase] + O2 = 11-hydroxy-(9Z,12Z)-octadecadienoate + oxidized [NADPH--hemoprotein reductase] + H2O + H(+). It functions in the pathway cofactor metabolism; retinol metabolism. It participates in steroid metabolism; cholesterol metabolism. Its pathway is lipid metabolism; arachidonate metabolism. Functionally, a cytochrome P450 monooxygenase involved in the metabolism of various endogenous substrates, including fatty acids, steroid hormones and vitamins. Mechanistically, uses molecular oxygen inserting one oxygen atom into a substrate, and reducing the second into a water molecule, with two electrons provided by NADPH via cytochrome P450 reductase (NADPH--hemoprotein reductase). Catalyzes the hydroxylation of carbon-hydrogen bonds. Exhibits high catalytic activity for the formation of hydroxyestrogens from estrone (E1) and 17beta-estradiol (E2), namely 2-hydroxy E1 and E2. Metabolizes cholesterol toward 25-hydroxycholesterol, a physiological regulator of cellular cholesterol homeostasis. May act as a major enzyme for all-trans retinoic acid biosynthesis in the liver. Catalyzes two successive oxidative transformation of all-trans retinol to all-trans retinal and then to the active form all-trans retinoic acid. Primarily catalyzes stereoselective epoxidation of the last double bond of polyunsaturated fatty acids (PUFA), displaying a strong preference for the (R,S) stereoisomer. Catalyzes bisallylic hydroxylation and omega-1 hydroxylation of PUFA. May also participate in eicosanoids metabolism by converting hydroperoxide species into oxo metabolites (lipoxygenase-like reaction, NADPH-independent). Plays a role in the oxidative metabolism of xenobiotics. Catalyzes the N-hydroxylation of heterocyclic amines and the O-deethylation of phenacetin. Metabolizes caffeine via N3-demethylation. The polypeptide is Cytochrome P450 1A2 (Cyp1a2) (Rattus norvegicus (Rat)).